Reading from the N-terminus, the 377-residue chain is tRNA pseudouridine synthase Pus10 (377 aa).

Residue Asp-206 is the Nucleophile of the active site. Substrate-binding residues include Tyr-270 and Tyr-339.

The protein belongs to the pseudouridine synthase Pus10 family.

The catalysed reaction is uridine(54) in tRNA = pseudouridine(54) in tRNA. It carries out the reaction uridine(55) in tRNA = pseudouridine(55) in tRNA. Responsible for synthesis of pseudouridine from uracil-54 and uracil-55 in the psi GC loop of transfer RNAs. The sequence is that of tRNA pseudouridine synthase Pus10 from Picrophilus torridus (strain ATCC 700027 / DSM 9790 / JCM 10055 / NBRC 100828 / KAW 2/3).